The primary structure comprises 294 residues: MFRKIYTNISITLIKQLREASGSPINDCKKALESTDGNFEKAIQYLKERGLAQAEKKMGNQTKQGVIVAYTNNKVAALAEINCETDFVARTSEFLEFSTNFIKTIVNQEQDFSSSNIDSVLNDKRKQLVGKLQENIVIGNLNAFVATKNSVFGVYQHNCLKNTICGLGGSVVELITESELTDVKTQILREGANNLAVTYLGLKPRFLYQHEVSSDVVDQIRKEVEKEFGSKTAQQQNFIVKGKLQNYYSDNVFEHQEYFLNEDEPKTIKQYMAKELEEVIKDKVKIGRCLYLTI.

Belongs to the EF-Ts family.

It localises to the mitochondrion. In terms of biological role, associates with the EF-Tu.GDP complex and induces the exchange of GDP to GTP. It remains bound to the aminoacyl-tRNA.EF-Tu.GTP complex up to the GTP hydrolysis stage on the ribosome. The sequence is that of Elongation factor Ts, mitochondrial 2 from Paramecium tetraurelia.